The sequence spans 871 residues: Leucine--tRNA ligase (871 aa).

The 'HIGH' region signature appears at 42-52 (PYPSGSLHMGH). A 'KMSKS' region motif is present at residues 634–638 (TMSKS). Position 637 (K637) interacts with ATP.

It belongs to the class-I aminoacyl-tRNA synthetase family.

Its subcellular location is the cytoplasm. It carries out the reaction tRNA(Leu) + L-leucine + ATP = L-leucyl-tRNA(Leu) + AMP + diphosphate. This is Leucine--tRNA ligase from Nostoc punctiforme (strain ATCC 29133 / PCC 73102).